A 61-amino-acid chain; its full sequence is Sec-independent protein translocase protein TatA (61 aa).

A helical membrane pass occupies residues 1–21 (MFGIGMPEMLIILVIILIIFG).

The protein belongs to the TatA/E family. The Tat system comprises two distinct complexes: a TatABC complex, containing multiple copies of TatA, TatB and TatC subunits, and a separate TatA complex, containing only TatA subunits. Substrates initially bind to the TatABC complex, which probably triggers association of the separate TatA complex to form the active translocon.

Its subcellular location is the cell inner membrane. Part of the twin-arginine translocation (Tat) system that transports large folded proteins containing a characteristic twin-arginine motif in their signal peptide across membranes. TatA could form the protein-conducting channel of the Tat system. The sequence is that of Sec-independent protein translocase protein TatA from Syntrophus aciditrophicus (strain SB).